The chain runs to 304 residues: uncharacterized protein (304 aa).

The first 15 residues, methionine 1–alanine 15, serve as a signal peptide directing secretion. Residues asparagine 28–serine 151 enclose the Thioredoxin domain.

This is an uncharacterized protein from Mycobacterium bovis (strain ATCC BAA-935 / AF2122/97).